A 199-amino-acid chain; its full sequence is 7-methyl-GTP pyrophosphatase (199 aa).

The Proton acceptor role is filled by Asp-76.

This sequence belongs to the Maf family. YceF subfamily. The cofactor is a divalent metal cation.

It is found in the cytoplasm. The enzyme catalyses N(7)-methyl-GTP + H2O = N(7)-methyl-GMP + diphosphate + H(+). Its function is as follows. Nucleoside triphosphate pyrophosphatase that hydrolyzes 7-methyl-GTP (m(7)GTP). May have a dual role in cell division arrest and in preventing the incorporation of modified nucleotides into cellular nucleic acids. The chain is 7-methyl-GTP pyrophosphatase (maf-2) from Brucella suis biovar 1 (strain 1330).